Reading from the N-terminus, the 350-residue chain is S-adenosylmethionine:tRNA ribosyltransferase-isomerase (350 aa).

It belongs to the QueA family. Monomer.

It localises to the cytoplasm. It catalyses the reaction 7-aminomethyl-7-carbaguanosine(34) in tRNA + S-adenosyl-L-methionine = epoxyqueuosine(34) in tRNA + adenine + L-methionine + 2 H(+). It functions in the pathway tRNA modification; tRNA-queuosine biosynthesis. In terms of biological role, transfers and isomerizes the ribose moiety from AdoMet to the 7-aminomethyl group of 7-deazaguanine (preQ1-tRNA) to give epoxyqueuosine (oQ-tRNA). This Bacillus thuringiensis subsp. konkukian (strain 97-27) protein is S-adenosylmethionine:tRNA ribosyltransferase-isomerase.